Reading from the N-terminus, the 156-residue chain is H/ACA ribonucleoprotein complex subunit 2-like protein (156 aa).

The protein belongs to the eukaryotic ribosomal protein eL8 family. Component of the small nucleolar ribonucleoprotein particle containing H/ACA-type snoRNAs (H/ACA snoRNPs).

It is found in the nucleus. Its subcellular location is the nucleolus. In terms of biological role, required for ribosome biogenesis. Part of a complex which catalyzes pseudouridylation of rRNA. This involves the isomerization of uridine such that the ribose is subsequently attached to C5, instead of the normal N1. Pseudouridine ('psi') residues may serve to stabilize the conformation of rRNAs. The sequence is that of H/ACA ribonucleoprotein complex subunit 2-like protein from Arabidopsis thaliana (Mouse-ear cress).